A 47-amino-acid polypeptide reads, in one-letter code: Sperm protamine P1 (47 aa).

This sequence belongs to the protamine P1 family. Testis.

Its subcellular location is the nucleus. The protein localises to the chromosome. Its function is as follows. Protamines substitute for histones in the chromatin of sperm during the haploid phase of spermatogenesis. They compact sperm DNA into a highly condensed, stable and inactive complex. This is Sperm protamine P1 (PRM1) from Myotis daubentonii (Daubenton's bat).